Here is a 397-residue protein sequence, read N- to C-terminus: Succinyl-diaminopimelate desuccinylase (397 aa).

H73 is a binding site for Zn(2+). The active site involves D75. D106 serves as a coordination point for Zn(2+). Residue E140 is the Proton acceptor of the active site. E141, E169, and H366 together coordinate Zn(2+).

It belongs to the peptidase M20A family. DapE subfamily. Homodimer. The cofactor is Zn(2+). Co(2+) is required as a cofactor.

The enzyme catalyses N-succinyl-(2S,6S)-2,6-diaminopimelate + H2O = (2S,6S)-2,6-diaminopimelate + succinate. The protein operates within amino-acid biosynthesis; L-lysine biosynthesis via DAP pathway; LL-2,6-diaminopimelate from (S)-tetrahydrodipicolinate (succinylase route): step 3/3. Its function is as follows. Catalyzes the hydrolysis of N-succinyl-L,L-diaminopimelic acid (SDAP), forming succinate and LL-2,6-diaminopimelate (DAP), an intermediate involved in the bacterial biosynthesis of lysine and meso-diaminopimelic acid, an essential component of bacterial cell walls. This is Succinyl-diaminopimelate desuccinylase from Rhizobium etli (strain ATCC 51251 / DSM 11541 / JCM 21823 / NBRC 15573 / CFN 42).